The primary structure comprises 410 residues: Argininosuccinate synthase (410 aa).

An ATP-binding site is contributed by 10-18 (AYSGGLDTS). L-citrulline contacts are provided by Tyr-88 and Ser-93. Residue Gly-118 participates in ATP binding. L-aspartate is bound by residues Thr-120, Asn-124, and Asp-125. Residue Asn-124 coordinates L-citrulline. 5 residues coordinate L-citrulline: Arg-128, Ser-177, Ser-186, Glu-262, and Tyr-274.

It belongs to the argininosuccinate synthase family. Type 1 subfamily. Homotetramer.

The protein localises to the cytoplasm. The enzyme catalyses L-citrulline + L-aspartate + ATP = 2-(N(omega)-L-arginino)succinate + AMP + diphosphate + H(+). It participates in amino-acid biosynthesis; L-arginine biosynthesis; L-arginine from L-ornithine and carbamoyl phosphate: step 2/3. This Thermoanaerobacter pseudethanolicus (strain ATCC 33223 / 39E) (Clostridium thermohydrosulfuricum) protein is Argininosuccinate synthase.